A 466-amino-acid polypeptide reads, in one-letter code: Asparagine--tRNA ligase (466 aa).

This sequence belongs to the class-II aminoacyl-tRNA synthetase family. As to quaternary structure, homodimer.

The protein localises to the cytoplasm. It carries out the reaction tRNA(Asn) + L-asparagine + ATP = L-asparaginyl-tRNA(Asn) + AMP + diphosphate + H(+). In Shewanella baltica (strain OS195), this protein is Asparagine--tRNA ligase.